Consider the following 2541-residue polypeptide: Talin-1 (2541 aa).

The FERM domain maps to 86–403 (RPLKIRMLDG…GYIDIILKKK (318 aa)). A Phosphothreonine modification is found at Thr-167. The interaction with LAYN stretch occupies residues 280–435 (FQAHKNCGQM…PKKSTVLQQQ (156 aa)). Residues Ser-405, Ser-425, Ser-446, Ser-620, and Ser-729 each carry the phosphoserine modification. The tract at residues 482-655 (RGHMPPLTSA…QASGELLQQI (174 aa)) is helical bundle R1. The tract at residues 656 to 786 (GESDTDPHFQ…ALNELLQHVK (131 aa)) is helical bundle R2. The helical bundle R3 stretch occupies residues 787–911 (AHATGAGPAG…NAAAQNAIKK (125 aa)). A helical bundle R4 region spans residues 913–1044 (LVQRLEHAAK…RTAAQKAQEA (132 aa)). At Ser-1021 the chain carries Phosphoserine. A helical bundle R5 region spans residues 1046–1206 (GPLEMDSALS…NRCVSCLPGQ (161 aa)). A Phosphotyrosine modification is found at Tyr-1116. Phosphothreonine is present on Thr-1142. 2 positions are modified to phosphoserine: Ser-1201 and Ser-1225. The helical bundle R6 stretch occupies residues 1207 to 1357 (RDVDNALRAV…QLITMCTQQA (151 aa)). A Phosphothreonine modification is found at Thr-1263. Ser-1323 carries the phosphoserine modification. An interaction with SYNM region spans residues 1327–1948 (AAPNLKSQLA…CSPSDAYTKK (622 aa)). Residues 1358–1453 (PGQKECDNAL…AYLVGVSDPN (96 aa)) are helical bundle R7A. The tract at residues 1359 to 1659 (GQKECDNALR…SMRDKAPGQL (301 aa)) is interaction with VCL and F-actin. The helical bundle R8 stretch occupies residues 1461-1580 (LVEPTQFARA…NLSAFASNPE (120 aa)). The residue at position 1544 (Lys-1544) is an N6-acetyllysine. Positions 1581 to 1653 (FSSIPAQISP…IKKLITSMRD (73 aa)) are helical bundle R7B. Positions 1655–1822 (APGQLECETA…TLNEAASAAG (168 aa)) are helical bundle R9. The segment at 1823–1973 (VVGGMVDSIT…VLAALQAGNR (151 aa)) is helical bundle R10. The residue at position 1849 (Ser-1849) is a Phosphoserine. Thr-1855 carries the post-translational modification Phosphothreonine. Residue Ser-1878 is modified to Phosphoserine. Positions 1974–2140 (GTQACITAAS…TVKAVEDEAT (167 aa)) are helical bundle R11. An N6-acetyllysine modification is found at Lys-2031. Ser-2040 carries the post-translational modification Phosphoserine. Lys-2115 carries the post-translational modification N6-acetyllysine. Residues 2141–2294 (KGTRALEATT…QAAEAMKGTE (154 aa)) are helical bundle R12. In terms of domain architecture, I/LWEQ spans 2293–2533 (TEWVDPEDPT…QIRQQQYKFL (241 aa)). The helical bundle R13 stretch occupies residues 2300 to 2482 (DPTVIAENEL…AAQKAAAFEE (183 aa)).

Part of a complex composed of THSD1, PTK2/FAK1, TLN1 and VCL. Interacts with THSD1; this promotes interaction with PTK2/FAK1 and VCL. Binds with high affinity to VCL and with low affinity to integrins. Interacts with APBB1IP; this inhibits VCL binding. Interacts with PTK2/FAK1. Interacts with PIP5K1C and NRAP. Interacts with LAYN. Interacts with SYNM. Interacts with ITGB1; the interaction is prevented by competitive binding of ITGB1BP1. Interacts with SVEP1. Interacts (via R7 domain) with KANK1 or KANK2 (via KN motif); this interaction likely initiates the assembly of cortical microtubule stabilization complexes (CMSCs) at the vicinity of focal adhesions. As to quaternary structure, interacts with VCL; shows reduced VCL binding compared to isoform 2. Interacts with APBB1IP; shows similar level of binding compared to isoform 2. In terms of assembly, interacts with VCL; shows enhanced VCL binding compared to isoform 1. Interacts with APBB1IP; shows similar level of binding compared to isoform 1. (Microbial infection) Interacts with human cytomegalovirus protein UL135. As to expression, expressed at low to non-detectable levels in many tissues but highly expressed in skin and pancreas with other tissues including kidney cortex, endocervix, testis, pituitary, liver, and spleen also showing robust expression.

It localises to the cell projection. Its subcellular location is the ruffle membrane. The protein localises to the cytoplasm. The protein resides in the cytoskeleton. It is found in the cell surface. It localises to the cell junction. Its subcellular location is the focal adhesion. In terms of biological role, high molecular weight cytoskeletal protein concentrated at regions of cell-matrix and cell-cell contacts. Involved in connections of major cytoskeletal structures to the plasma membrane. With KANK1 co-organize the assembly of cortical microtubule stabilizing complexes (CMSCs) positioned to control microtubule-actin crosstalk at focal adhesions (FAs) rims. The polypeptide is Talin-1 (TLN1) (Homo sapiens (Human)).